The primary structure comprises 424 residues: Appressorium protein ROW1 (424 aa).

An N-terminal signal peptide occupies residues 1-21; sequence MTKLTLTVALVSALLASGASA. 4 disordered regions span residues 19-54, 69-90, 278-304, and 327-398; these read ASAQ…WQPK, ANRI…GYNT, SGST…CSSV, and SSSA…TQGA. Topologically, residues 22 to 403 are extracellular; sequence QQPTGTGNGP…NTQGAASSAS (382 aa). The segment covering 37 to 54 has biased composition (polar residues); it reads TDLNRNQPTKSWTQWQPK. Low complexity-rich tracts occupy residues 295 to 304 and 327 to 347; these read APSSSQCSSV and SSSA…SASS. Over residues 362-382 the composition is skewed to gly residues; that stretch reads SGTGSGSGSGSGSGSGSGSGS. Positions 383–398 are enriched in low complexity; it reads SSGSSSSGSSSNTQGA. Residues 404–424 form a helical membrane-spanning segment; the sequence is SLTISVGLAGLVAIGAAAFAL.

It is found in the cell membrane. The protein resides in the secreted. Plays a role in the formation of the appressorium, a specialized infection structure with the purpose of penetrating the host surface, and is required for proper remodeling of the appressorium wall and vesicle secretion. The sequence is that of Appressorium protein ROW1 from Mycosarcoma maydis (Corn smut fungus).